Reading from the N-terminus, the 165-residue chain is Nucleotide-binding protein P9515_05441 (165 aa).

This sequence belongs to the YajQ family.

Functionally, nucleotide-binding protein. The chain is Nucleotide-binding protein P9515_05441 from Prochlorococcus marinus (strain MIT 9515).